Consider the following 171-residue polypeptide: Protein phosphatase 1 regulatory subunit 1A (171 aa).

At M1 the chain carries N-acetylmethionine. Residues 1–171 (MEQDNSPRKI…PLDSKGANSV (171 aa)) are disordered. Residues 9–12 (KIQF) are essential for activity. A compositionally biased stretch (basic and acidic residues) spans 19-29 (PHLDPEAAEQI). T35 bears the Phosphothreonine; by PKA mark. The tract at residues 42–54 (TSDQSSPEIDEDR) is essential for activity. 4 positions are modified to phosphoserine: S43, S46, S47, and S67. Residues 135–157 (KTAECIPKTHERGSKEPSTKEPS) are compositionally biased toward basic and acidic residues. An interaction with PPP1R15A region spans residues 143-171 (THERGSKEPSTKEPSTHIPPLDSKGANSV).

The protein belongs to the protein phosphatase inhibitor 1 family. Interacts with PPP1R15A. In terms of processing, phosphorylation of Thr-35 is required for activity.

Functionally, inhibitor of protein-phosphatase 1. This protein may be important in hormonal control of glycogen metabolism. Hormones that elevate intracellular cAMP increase I-1 activity in many tissues. I-1 activation may impose cAMP control over proteins that are not directly phosphorylated by PKA. Following a rise in intracellular calcium, I-1 is inactivated by calcineurin (or PP2B). Does not inhibit type-2 phosphatases. The polypeptide is Protein phosphatase 1 regulatory subunit 1A (PPP1R1A) (Homo sapiens (Human)).